The primary structure comprises 122 residues: Large ribosomal subunit protein bL19 (122 aa).

This sequence belongs to the bacterial ribosomal protein bL19 family.

In terms of biological role, this protein is located at the 30S-50S ribosomal subunit interface and may play a role in the structure and function of the aminoacyl-tRNA binding site. This Mycoplasmoides gallisepticum (strain R(low / passage 15 / clone 2)) (Mycoplasma gallisepticum) protein is Large ribosomal subunit protein bL19.